A 93-amino-acid chain; its full sequence is Mammaglobin-A (93 aa).

The first 18 residues, 1–18 (MKLLMVLMLAALSQHCYA), serve as a signal peptide directing secretion. N-linked (GlcNAc...) asparagine glycans are attached at residues Asn53 and Asn68.

Belongs to the secretoglobin family. Lipophilin subfamily. Mammary gland specific. Over-expressed in breast cancer.

It is found in the secreted. This Homo sapiens (Human) protein is Mammaglobin-A (SCGB2A2).